Reading from the N-terminus, the 353-residue chain is Photosystem II protein D1 (353 aa).

Residue T2 is modified to N-acetylthreonine. T2 is subject to Phosphothreonine. A run of 3 helical transmembrane segments spans residues 29-46 (YIGW…TATS), 118-133 (HFLL…EWEL), and 142-156 (WIAV…AATA). A chlorophyll a-binding site is contributed by H118. Position 126 (Y126) interacts with pheophytin a. 2 residues coordinate [CaMn4O5] cluster: D170 and E189. Residues 197-218 (FHMLGVAGVFGGSLFSAMHGSL) traverse the membrane as a helical segment. Position 198 (H198) interacts with chlorophyll a. Residues H215 and 264 to 265 (SF) each bind a quinone. H215 provides a ligand contact to Fe cation. Fe cation is bound at residue H272. Residues 274–288 (FLAAWPVVGIWFTAL) form a helical membrane-spanning segment. [CaMn4O5] cluster-binding residues include H332, E333, D342, and A344. A propeptide spanning residues 345–353 (AVEAPSTNG) is cleaved from the precursor.

It belongs to the reaction center PufL/M/PsbA/D family. As to quaternary structure, PSII is composed of 1 copy each of membrane proteins PsbA, PsbB, PsbC, PsbD, PsbE, PsbF, PsbH, PsbI, PsbJ, PsbK, PsbL, PsbM, PsbT, PsbX, PsbY, PsbZ, Psb30/Ycf12, at least 3 peripheral proteins of the oxygen-evolving complex and a large number of cofactors. It forms dimeric complexes. The D1/D2 heterodimer binds P680, chlorophylls that are the primary electron donor of PSII, and subsequent electron acceptors. It shares a non-heme iron and each subunit binds pheophytin, quinone, additional chlorophylls, carotenoids and lipids. D1 provides most of the ligands for the Mn4-Ca-O5 cluster of the oxygen-evolving complex (OEC). There is also a Cl(-1) ion associated with D1 and D2, which is required for oxygen evolution. The PSII complex binds additional chlorophylls, carotenoids and specific lipids. serves as cofactor. In terms of processing, tyr-161 forms a radical intermediate that is referred to as redox-active TyrZ, YZ or Y-Z. C-terminally processed by CTPA; processing is essential to allow assembly of the oxygen-evolving complex and thus photosynthetic growth.

Its subcellular location is the plastid. It is found in the chloroplast thylakoid membrane. It catalyses the reaction 2 a plastoquinone + 4 hnu + 2 H2O = 2 a plastoquinol + O2. Functionally, photosystem II (PSII) is a light-driven water:plastoquinone oxidoreductase that uses light energy to abstract electrons from H(2)O, generating O(2) and a proton gradient subsequently used for ATP formation. It consists of a core antenna complex that captures photons, and an electron transfer chain that converts photonic excitation into a charge separation. The D1/D2 (PsbA/PsbD) reaction center heterodimer binds P680, the primary electron donor of PSII as well as several subsequent electron acceptors. This chain is Photosystem II protein D1, found in Drimys granadensis.